A 381-amino-acid chain; its full sequence is Peptidoglycan glycosyltransferase MrdB (381 aa).

The next 10 helical transmembrane spans lie at 11 to 31 (FDLL…LLIF), 40 to 60 (KQGV…FIPF), 66 to 86 (WLFA…FMGS), 102 to 122 (ITLQ…AHLI), 132 to 152 (YDWG…ALIL), 156 to 176 (DLGT…IVGL), 180 to 200 (VWLP…HFLH), 263 to 283 (FGFL…LHLF), 297 to 317 (IVAL…IAMT), and 328 to 348 (LPLF…FAIL).

The protein belongs to the SEDS family. MrdB/RodA subfamily.

It is found in the cell inner membrane. The enzyme catalyses [GlcNAc-(1-&gt;4)-Mur2Ac(oyl-L-Ala-gamma-D-Glu-L-Lys-D-Ala-D-Ala)](n)-di-trans,octa-cis-undecaprenyl diphosphate + beta-D-GlcNAc-(1-&gt;4)-Mur2Ac(oyl-L-Ala-gamma-D-Glu-L-Lys-D-Ala-D-Ala)-di-trans,octa-cis-undecaprenyl diphosphate = [GlcNAc-(1-&gt;4)-Mur2Ac(oyl-L-Ala-gamma-D-Glu-L-Lys-D-Ala-D-Ala)](n+1)-di-trans,octa-cis-undecaprenyl diphosphate + di-trans,octa-cis-undecaprenyl diphosphate + H(+). Its pathway is cell wall biogenesis; peptidoglycan biosynthesis. Its function is as follows. Peptidoglycan polymerase that is essential for cell wall elongation. The chain is Peptidoglycan glycosyltransferase MrdB from Helicobacter pylori (strain J99 / ATCC 700824) (Campylobacter pylori J99).